The sequence spans 323 residues: Conjugal transfer protein TrbB (323 aa).

151–158 contacts ATP; sequence GGTGSGKT.

It belongs to the GSP E family.

Its subcellular location is the cytoplasm. In Rhizobium radiobacter (Agrobacterium tumefaciens), this protein is Conjugal transfer protein TrbB (trbB).